Consider the following 326-residue polypeptide: Probable UDP-3-O-acyl-N-acetylglucosamine deacetylase 2, mitochondrial (326 aa).

A mitochondrion-targeting transit peptide spans 1 to 21 (MRLPVTVKATKPSFLVIWIRY). Zn(2+) is bound by residues His-109, His-281, and Asp-285.

The protein belongs to the LpxC family. The cofactor is Zn(2+).

It is found in the mitochondrion. The catalysed reaction is a UDP-3-O-[(3R)-3-hydroxyacyl]-N-acetyl-alpha-D-glucosamine + H2O = a UDP-3-O-[(3R)-3-hydroxyacyl]-alpha-D-glucosamine + acetate. Its pathway is glycolipid biosynthesis; lipid IV(A) biosynthesis; lipid IV(A) from (3R)-3-hydroxytetradecanoyl-[acyl-carrier-protein] and UDP-N-acetyl-alpha-D-glucosamine: step 2/6. Its function is as follows. Involved in the biosynthesis of lipid A, a phosphorylated glycolipid that in bacteria anchors the lipopolysaccharide to the outer membrane of the cell. Lipid A-like molecules in plants may serve as structural components of the outer membranes of mitochondria and/or chloroplasts, or may be involved in signal transduction or plant defense responses (Potential). The sequence is that of Probable UDP-3-O-acyl-N-acetylglucosamine deacetylase 2, mitochondrial (LPXC2) from Arabidopsis thaliana (Mouse-ear cress).